Consider the following 330-residue polypeptide: AA9 family lytic polysaccharide monooxygenase E (330 aa).

A signal peptide spans 1 to 20; that stretch reads MRSTLVTGLIAGLLSQQAAA. Residues H21 and H99 each contribute to the Cu(2+) site. C58 and C193 are disulfide-bonded. 2 residues coordinate O2: H179 and Q188. Position 190 (Y190) interacts with Cu(2+). The region spanning 293–330 is the CBM1 domain; the sequence is CSVAKYQQCGGTGYTGCTSCASGSTCSAVSPPYYSQCV.

The protein belongs to the polysaccharide monooxygenase AA9 family. Requires Cu(2+) as cofactor.

Its subcellular location is the secreted. It catalyses the reaction [(1-&gt;4)-beta-D-glucosyl]n+m + reduced acceptor + O2 = 4-dehydro-beta-D-glucosyl-[(1-&gt;4)-beta-D-glucosyl]n-1 + [(1-&gt;4)-beta-D-glucosyl]m + acceptor + H2O.. Lytic polysaccharide monooxygenase (LPMO) that depolymerizes crystalline and amorphous polysaccharides via the oxidation of scissile alpha- or beta-(1-4)-glycosidic bonds, yielding exclusively C1 oxidation products. Catalysis by LPMOs requires the reduction of the active-site copper from Cu(II) to Cu(I) by a reducing agent and H(2)O(2) or O(2) as a cosubstrate. The chain is AA9 family lytic polysaccharide monooxygenase E (gh61-5) from Neurospora crassa (strain ATCC 24698 / 74-OR23-1A / CBS 708.71 / DSM 1257 / FGSC 987).